Consider the following 272-residue polypeptide: 3-methyl-2-oxobutanoate hydroxymethyltransferase (272 aa).

Residues aspartate 54 and aspartate 93 each coordinate Mg(2+). 3-methyl-2-oxobutanoate-binding positions include 54–55 (DS), aspartate 93, and lysine 121. Residue glutamate 123 coordinates Mg(2+). Glutamate 190 acts as the Proton acceptor in catalysis.

The protein belongs to the PanB family. As to quaternary structure, homodecamer; pentamer of dimers. Requires Mg(2+) as cofactor.

The protein localises to the cytoplasm. The enzyme catalyses 3-methyl-2-oxobutanoate + (6R)-5,10-methylene-5,6,7,8-tetrahydrofolate + H2O = 2-dehydropantoate + (6S)-5,6,7,8-tetrahydrofolate. The protein operates within cofactor biosynthesis; (R)-pantothenate biosynthesis; (R)-pantoate from 3-methyl-2-oxobutanoate: step 1/2. In terms of biological role, catalyzes the reversible reaction in which hydroxymethyl group from 5,10-methylenetetrahydrofolate is transferred onto alpha-ketoisovalerate to form ketopantoate. This chain is 3-methyl-2-oxobutanoate hydroxymethyltransferase, found in Janthinobacterium sp. (strain Marseille) (Minibacterium massiliensis).